The chain runs to 603 residues: uncharacterized protein (603 aa).

A PE domain is found at 1 to 93; that stretch reads MSFVIAAPET…AGAYASAEAA (93 aa).

The protein belongs to the mycobacterial PE family. PGRS subfamily.

This is an uncharacterized protein from Mycobacterium tuberculosis (strain ATCC 25618 / H37Rv).